We begin with the raw amino-acid sequence, 378 residues long: Ribosomal RNA large subunit methyltransferase G (378 aa).

It belongs to the methyltransferase superfamily. RlmG family.

It is found in the cytoplasm. The enzyme catalyses guanosine(1835) in 23S rRNA + S-adenosyl-L-methionine = N(2)-methylguanosine(1835) in 23S rRNA + S-adenosyl-L-homocysteine + H(+). In terms of biological role, specifically methylates the guanine in position 1835 (m2G1835) of 23S rRNA. The protein is Ribosomal RNA large subunit methyltransferase G of Shigella boydii serotype 18 (strain CDC 3083-94 / BS512).